Reading from the N-terminus, the 457-residue chain is Proton extrusion protein PxcA (457 aa).

A run of 4 helical transmembrane segments spans residues 239–259 (FILLLIIVPLLTHQLTKTFFL), 332–352 (INAISNVFADIFSLIAFGVVI), 368–390 (GILYSLSDSAKAFLIILFTDMFV), and 417–437 (FNFLFIATFPVILDTVLKYWI).

Belongs to the CemA family.

It localises to the cell inner membrane. Functionally, required for H(+) efflux immediately after light irradiation to form a rapid H(+) concentration gradient across the thylakoid membranes. Together with PxcL, contributes to transient H(+) uptake following dark to light transition. This is Proton extrusion protein PxcA from Gloeothece citriformis (strain PCC 7424) (Cyanothece sp. (strain PCC 7424)).